Reading from the N-terminus, the 194-residue chain is Superoxide dismutase [Cu-Zn] (194 aa).

The first 20 residues, 1–20 (MTRPLALIIFLVAILTNTDP), serve as a signal peptide directing secretion. Cu cation is bound by residues H85 and H104. C96 and C188 form a disulfide bridge. Residues H104, H112, H121, and D124 each coordinate Zn(2+). H162 is a Cu cation binding site.

This sequence belongs to the Cu-Zn superoxide dismutase family. Homodimer. The cofactor is Cu cation. Zn(2+) serves as cofactor.

The catalysed reaction is 2 superoxide + 2 H(+) = H2O2 + O2. Functionally, destroys radicals which are normally produced within the cells and which are toxic to biological systems. In Ramazzottius varieornatus (Water bear), this protein is Superoxide dismutase [Cu-Zn].